A 939-amino-acid chain; its full sequence is AP-2 complex subunit alpha-2 (939 aa).

Residues 11-12 (RG), Lys43, Tyr53, and 57-61 (KYVCK) each bind a 1,2-diacyl-sn-glycero-3-phospho-(1D-myo-inositol-3,4,5-trisphosphate). Positions 612 to 681 (LAKLKKKKGP…AGPPPSSGGS (70 aa)) are disordered. The segment covering 646-667 (PASTSAVSTPSPSADLLGLGAA) has biased composition (low complexity). A compositionally biased stretch (pro residues) spans 668 to 677 (PPAPAGPPPS).

It belongs to the adaptor complexes large subunit family. In terms of assembly, adaptor protein complex 2 (AP-2) is a heterotetramer composed of two large adaptins (alpha-type subunit AP2A1 or AP2A2 and beta-type subunit AP2B1), a medium adaptin (mu-type subunit AP2M1) and a small adaptin (sigma-type subunit AP2S1). Binds EPN1, EPS15, AMPH, SNAP91 and BIN1. Interacts with HIP1. Interacts with DGKD. Interacts with DENND1A, DENND1B and DENND1C. Interacts with FCHO1 and DAB2. Interacts with ATAT1; this interaction is required for efficient alpha-tubulin acetylation by ATAT1. Interacts with KIAA1107. Together with AP2B1 and AP2M1, it interacts with ADAM10; this interaction facilitates ADAM10 endocytosis from the plasma membrane during long-term potentiation in hippocampal neurons. Interacts with CLN3 (via dileucine motif). Interacts with ABCB11; this interaction regulates cell membrane expression of ABCB11 through its internalization in a clathrin-dependent manner and its subsequent degradation. Interacts with Cacfd1. Interacts with DNAJC6. In terms of tissue distribution, expressed in the brain (at protein level).

The protein localises to the cell membrane. Its subcellular location is the membrane. It localises to the coated pit. Its function is as follows. Component of the adaptor protein complex 2 (AP-2). Adaptor protein complexes function in protein transport via transport vesicles in different membrane traffic pathways. Adaptor protein complexes are vesicle coat components and appear to be involved in cargo selection and vesicle formation. AP-2 is involved in clathrin-dependent endocytosis in which cargo proteins are incorporated into vesicles surrounded by clathrin (clathrin-coated vesicles, CCVs) which are destined for fusion with the early endosome. The clathrin lattice serves as a mechanical scaffold but is itself unable to bind directly to membrane components. Clathrin-associated adaptor protein (AP) complexes which can bind directly to both the clathrin lattice and to the lipid and protein components of membranes are considered to be the major clathrin adaptors contributing the CCV formation. AP-2 also serves as a cargo receptor to selectively sort the membrane proteins involved in receptor-mediated endocytosis. AP-2 seems to play a role in the recycling of synaptic vesicle membranes from the presynaptic surface. AP-2 recognizes Y-X-X-[FILMV] (Y-X-X-Phi) and [ED]-X-X-X-L-[LI] endocytosis signal motifs within the cytosolic tails of transmembrane cargo molecules. AP-2 may also play a role in maintaining normal post-endocytic trafficking through the ARF6-regulated, non-clathrin pathway. During long-term potentiation in hippocampal neurons, AP-2 is responsible for the endocytosis of ADAM10. The AP-2 alpha subunit binds polyphosphoinositide-containing lipids, positioning AP-2 on the membrane. The AP-2 alpha subunit acts via its C-terminal appendage domain as a scaffolding platform for endocytic accessory proteins. The AP-2 alpha and AP-2 sigma subunits are thought to contribute to the recognition of the [ED]-X-X-X-L-[LI] motif. The protein is AP-2 complex subunit alpha-2 (AP2A2) of Homo sapiens (Human).